A 594-amino-acid chain; its full sequence is MSKKRKWDDDYVRYWFTCTTEVDGTQRPQCVLCNSVFSNADLRPSKLSDHFNRQHGGVAGHDLNSLKHMPAPSDQSETLKAFGVASHEDTLLQASYQFAYLCAKEKNPHTVAEKLVKPCALEIAQIVLGPDAQKKLQQVPLSDDVIHSRIDEMSQDILQQVLEDIKASPLKVGIQLAETTDMDDCSQLMAFVRYIKEREIVEEFLFCEPLQLSMKGIDVFNLFRDFFLKHKIALDVCGSVCTDGASSMLGENSEFVAYVKKEIPHIVVTHCLLNPHALVIKTLPTKLRDALFTVVRVINFIKGRAPNHRLFQAFFEEIGIEYSVLLFHTEMRWLSRGQILTHIFEMYEEINQFLHHKSSNLVDGFENKEFKIHLAYLADLFKHLNELSASMQRTGMNTVSAREKLSAFVRKFPFWQKRIEKRNFTNFPFLEEIIVSDNEGIFIAAEITLHLQQLSNFFHGYFSIGDLNEASKWILDPFLFNIDFVDDSYLMKNDLAELRASGQILMEFETMKLEDFWCAQFTAFPNLAKTALEILMPFATTYLCELGFSSLLHFKTKSRSCFNLSDDIRVAISKKVPRFSDIIEQKLQLQQKSL.

This Homo sapiens (Human) protein is Protein FAM200C.